Consider the following 361-residue polypeptide: uncharacterized protein (361 aa).

The N-terminal stretch at 1-17 (MNLFIYVLLLSIWTSSC) is a signal peptide. The Extracellular segment spans residues 18-47 (LDRNESNGSATAVTTHAEFKQTKLQELRRR). N24 carries an N-linked (GlcNAc...) asparagine glycan. The helical transmembrane segment at 48–68 (LLIIVIGTLITGYMVSCTCLL) threads the bilayer. At 69 to 361 (HYSCDSEEAH…EDIYKNSRNN (293 aa)) the chain is on the cytoplasmic side. Residues 95 to 106 (SSKISFTDSKSP) show a composition bias toward polar residues. A disordered region spans residues 95–197 (SSKISFTDSK…SQVSPSYPEK (103 aa)). Residues 144–158 (PSSQKKPSKPSAPKK) are compositionally biased toward low complexity. The span at 169–185 (HRTRSPKKAHRQAHAHK) shows a compositional bias: basic residues.

It localises to the membrane. This is an uncharacterized protein from Bos taurus (Bovine).